Consider the following 325-residue polypeptide: Glycerol-3-phosphate dehydrogenase [NAD(P)+] (325 aa).

Positions 14, 15, 35, and 109 each coordinate NADPH. Sn-glycerol 3-phosphate contacts are provided by lysine 109 and glycine 137. Alanine 141 provides a ligand contact to NADPH. Residues lysine 192, aspartate 247, serine 257, arginine 258, and asparagine 259 each coordinate sn-glycerol 3-phosphate. The Proton acceptor role is filled by lysine 192. Arginine 258 provides a ligand contact to NADPH. 2 residues coordinate NADPH: leucine 282 and glutamate 284.

The protein belongs to the NAD-dependent glycerol-3-phosphate dehydrogenase family.

It localises to the cytoplasm. The catalysed reaction is sn-glycerol 3-phosphate + NAD(+) = dihydroxyacetone phosphate + NADH + H(+). The enzyme catalyses sn-glycerol 3-phosphate + NADP(+) = dihydroxyacetone phosphate + NADPH + H(+). It functions in the pathway membrane lipid metabolism; glycerophospholipid metabolism. Catalyzes the reduction of the glycolytic intermediate dihydroxyacetone phosphate (DHAP) to sn-glycerol 3-phosphate (G3P), the key precursor for phospholipid synthesis. The chain is Glycerol-3-phosphate dehydrogenase [NAD(P)+] from Rickettsia conorii (strain ATCC VR-613 / Malish 7).